The following is a 71-amino-acid chain: Exodeoxyribonuclease 7 small subunit (71 aa).

It belongs to the XseB family. In terms of assembly, heterooligomer composed of large and small subunits.

It localises to the cytoplasm. The enzyme catalyses Exonucleolytic cleavage in either 5'- to 3'- or 3'- to 5'-direction to yield nucleoside 5'-phosphates.. In terms of biological role, bidirectionally degrades single-stranded DNA into large acid-insoluble oligonucleotides, which are then degraded further into small acid-soluble oligonucleotides. The polypeptide is Exodeoxyribonuclease 7 small subunit (Streptococcus equi subsp. equi (strain 4047)).